The primary structure comprises 1024 residues: NLR family CARD domain-containing protein 4 (1024 aa).

One can recognise a CARD domain in the interval 1-88; that stretch reads MNFIKDNSRA…PLFQDLNGQS (88 aa). The tract at residues 95-298 is nucleotide-binding domain (NBD); that stretch reads EGDLDDLAQD…QFGALTAEVG (204 aa). Residues 163–476 enclose the NACHT domain; that stretch reads SPCIIEGESG…VTKGNGYLQK (314 aa). 169-176 is a binding site for ATP; that stretch reads GESGKGKS. The segment at 356–463 is winged-helix domain (WHD); it reads SHTQTTLFHT…RLSSLLTSHE (108 aa). Ser533 is modified (phosphoserine). 12 LRR repeats span residues 578–598, 656–679, 735–758, 762–785, 787–812, 824–847, 848–870, 878–902, 911–933, 936–963, 965–985, and 999–1021; these read FFQGKSLYINSGNIPDYLFDF, KQEFRTLEVTLRDFSKLNKQDIRY, VTNLKTLSIHDLQNQRLPGGLTDS, LKNLTKLIMDNIKMNEEDAIKLAE, LKNLKKMCLFHLTHLSDIGEGMDYIV, EIQLVSCCLSANAVKILAQNLHNL, VKLSILDLSENYLEKDGNEALHE, LEQLTALMLPWGCDVQGSLSSLLKH, KLGLKNWRLTDTEIRILGAFFGK, LKNFQQLNLAGNRVSSDGWLAFMGVFEN, KQLVFFDFSTKEFLPDPALVR, and EARLVGWQFDDDDLSVITGAFKL.

As to quaternary structure, homooligomer; homooligomerizes to induce formation of the NLRC4 inflammasome. Homooligomerizes following activation by pathogenic proteins. Component of the NLRC4 inflammasome, at least composed of NLRC4 and caspase-1 (CASP1). Some NLRC4 inflammasomes contain PYCARD/ASC, while some others directly contact and activate CASP1. Interacts (via CARD domain) with PYCARD/ASC, pro-caspase-1 (CASP1), NOD2, BCL10 and NALP1 (NAC) by CARD-CARD interaction. Interacts with EIF2AK2/PKR. In terms of processing, phosphorylated at Ser-533 following infection of macrophages with S.typhimurium (Salmonella). Phosphorylation is essential for NLRC4 inflammasome function to promote caspase-1 activation and pyroptosis. PRKCD phosphorylates Ser-533 in vitro. As to expression, isoform 2 is expressed ubiquitously, although highly expressed in lung and spleen. Isoform 1 is highly expressed in lung, followed by leukocytes especially monocytes, lymph node, colon, brain, prostate, placenta, spleen, bone marrow and fetal liver. Isoform 4 is only detected in brain.

The protein resides in the cytoplasm. It is found in the cytosol. The protein localises to the inflammasome. Its function is as follows. Key component of inflammasomes that indirectly senses specific proteins from pathogenic bacteria and fungi and responds by assembling an inflammasome complex that promotes caspase-1 activation, cytokine production and macrophage pyroptosis. The NLRC4 inflammasome is activated as part of the innate immune response to a range of intracellular bacteria. This is NLR family CARD domain-containing protein 4 (NLRC4) from Homo sapiens (Human).